The primary structure comprises 472 residues: Meiotic spindle formation protein mei-1 (472 aa).

Positions 83–161 are disordered; it reads HEAMTRQSGS…TQGILPQNSA (79 aa). S92 carries the phosphoserine; by mbk-2 modification. 2 stretches are compositionally biased toward polar residues: residues 134-143 and 150-161; these read KSTSSMSTNP and NPTQGILPQNSA. ATP is bound by residues 233–240 and 351–352; these read GPPGTGKT and RR.

It belongs to the AAA ATPase family. Katanin p60 subunit A1 subfamily. In terms of assembly, homohexamer; ATP hydrolysis initiates a cycle between an open spiral and a closed ring conformation which is probably involved in pulling tubulin dimers out from microtubules. Interacts with mei-2, which may serve as a targeting subunit. Interacts with mel-26, which targets mei-1 for ubiquitin mediated proteolysis. Interacts with phosphatase pph-4.1. In terms of processing, phosphorylated. Phosphorylation by mbk-2 is required for its rapid degradation following meiosis II. Likely dephosphorylated by the PP4 complex composed of catalytic subunit pph-4.1 and regulatory subunit ppfr-1. Post-translationally, polyubiquitination targets the protein for rapid degradation via the ubiquitin system at the end of meiosis. The BTB domain protein mel-26 may serve to specifically target mei-1 for ubiquitination by cul-3 containing complexes. The cul-3 protein is in turn regulated by neddylation by ned-8.

The protein localises to the cytoplasm. It is found in the cytoskeleton. It localises to the spindle pole. Its subcellular location is the chromosome. The catalysed reaction is n ATP + n H2O + a microtubule = n ADP + n phosphate + (n+1) alpha/beta tubulin heterodimers.. Its activity is regulated as follows. ATPase activity is stimulated by microtubules, which promote homooligomerization. ATP-dependent microtubule severing is stimulated by interaction with mei-2. Catalytic subunit of a complex which severs microtubules in an ATP-dependent manner. Microtubule severing may promote rapid reorganization of cellular microtubule arrays. Required specifically for meiotic spindle formation in the female germline; the presence of this protein is inimical to the formation of mitotic spindles. In body wall muscles, regulates organization of myosin thick filaments. This Caenorhabditis elegans protein is Meiotic spindle formation protein mei-1.